The primary structure comprises 291 residues: Shikimate dehydrogenase (NADP(+)) (291 aa).

Shikimate-binding positions include serine 26–serine 28 and serine 73. Lysine 77 serves as the catalytic Proton acceptor. Shikimate contacts are provided by asparagine 98 and aspartate 113. NADP(+)-binding positions include glycine 137–alanine 141 and valine 238. Residue tyrosine 240 coordinates shikimate. Glycine 261 serves as a coordination point for NADP(+).

Belongs to the shikimate dehydrogenase family. Homodimer.

It catalyses the reaction shikimate + NADP(+) = 3-dehydroshikimate + NADPH + H(+). The protein operates within metabolic intermediate biosynthesis; chorismate biosynthesis; chorismate from D-erythrose 4-phosphate and phosphoenolpyruvate: step 4/7. Involved in the biosynthesis of the chorismate, which leads to the biosynthesis of aromatic amino acids. Catalyzes the reversible NADPH linked reduction of 3-dehydroshikimate (DHSA) to yield shikimate (SA). This chain is Shikimate dehydrogenase (NADP(+)), found in Listeria monocytogenes serotype 4b (strain F2365).